A 468-amino-acid polypeptide reads, in one-letter code: H(+)/Cl(-) exchange transporter ClcA (468 aa).

Topologically, residues 1–30 (MSTRETFKISLLAKMPKDVINQFLSKDKTP) are cytoplasmic. The helical transmembrane segment at 31-67 (FSVLFLSLLVGILAGLVGTYFEQAVHLVSETRTDWLK) threads the bilayer. The Periplasmic portion of the chain corresponds to 68–74 (SEIGSFL). A helical membrane pass occupies residues 75–98 (PLWLAAFLISAFLAFIGYFLVHRF). Residues 104–108 (GSGIP) carry the Selectivity filter part_1 motif. Ser105 provides a ligand contact to chloride. Residues 107–114 (IPEIEGAM) constitute an intramembrane region (helical). Over 115 to 121 (DGMRPVR) the chain is Cytoplasmic. 2 helical membrane-spanning segments follow: residues 122–139 (WWRVLPVKFFGGMGALGS) and 146–164 (EGPTVQMGGAVGRMISDIF). The short motif at 144 to 148 (GREGP) is the Selectivity filter part_2 element. The Cytoplasmic segment spans residues 165–174 (RVKNEDTRHS). 2 intramembrane regions (helical) span residues 175–187 (LLAAGAAGGLAAA) and 191–199 (PLAGIMFVI). At 200–212 (EEMRPQFRYTLIS) the chain is on the cytoplasmic side. A helical transmembrane segment spans residues 213-230 (VRAVIISAVAANIVFRVI). The Periplasmic segment spans residues 231–250 (NGQDAVITMPQYDAPELSTL). The chain crosses the membrane as a helical span at residues 251–279 (GLFLLLGALFGVFGVLFNYLITLAQDLFV). Topologically, residues 280-285 (KFHRND) are cytoplasmic. Residues 286–307 (RKRYLLTGSMIGGCFGLLLLYV) form a helical membrane-spanning segment. At 308 to 327 (PELTGGGISLIPTITNGGYG) the chain is on the periplasmic side. The next 2 membrane-spanning stretches (helical) occupy residues 328 to 347 (AGILLLLFVGRIFTTLLCFG) and 353 to 374 (GIFAPMLALGTLFGYAFGLIAK). Positions 353 to 357 (GIFAP) match the Selectivity filter part_3 motif. Chloride is bound by residues Ile354 and Phe355. Over 375–384 (VWFPELNIEP) the chain is Periplasmic. The segment at residues 385–399 (GMFAIAGMGALFAAT) is an intramembrane region (helical). The segment at residues 400–402 (VRA) is an intramembrane region (note=Loop between two helices). Residues 403-414 (PITGILLVIEMT) constitute an intramembrane region (helical). An intramembrane region (note=Loop between two helices) is located at residues 415 to 419 (NNYHL). A helical transmembrane segment spans residues 420-436 (ILPLIITSLGAVIFAQL). Over 437 to 468 (LGGQPIYSQLLHRTLKNQKLQQQDLPPQSPNS) the chain is Cytoplasmic. Tyr443 serves as a coordination point for chloride.

This sequence belongs to the chloride channel (TC 2.A.49) family. ClcA subfamily. As to quaternary structure, homodimer.

The protein localises to the cell inner membrane. It carries out the reaction 2 chloride(in) + H(+)(out) = 2 chloride(out) + H(+)(in). Its function is as follows. Proton-coupled chloride transporter. Functions as antiport system and exchanges two chloride ions for 1 proton. Probably acts as an electrical shunt for an outwardly-directed proton pump that is linked to amino acid decarboxylation, as part of the extreme acid resistance (XAR) response. In Vibrio cholerae serotype O1 (strain ATCC 39541 / Classical Ogawa 395 / O395), this protein is H(+)/Cl(-) exchange transporter ClcA.